Here is a 613-residue protein sequence, read N- to C-terminus: Kelch-like protein 21 (613 aa).

One can recognise a BTB domain in the interval 38–105 (FDVTLCAEGK…CYTGRVTVTH (68 aa)). The region spanning 140 to 242 (CLEIQDFAEA…RRFYLLAHVE (103 aa)) is the BACK domain. Kelch repeat units follow at residues 289–337 (ILVV…ALGN), 338–384 (DIYV…VLKG), 386–424 (LYVV…ACRG), 426–472 (LYAI…TLNG), 474–514 (IYFV…ALGG), and 515–562 (RLYV…SIFR).

Component of the BCR(KLHL21) E3 ubiquitin ligase complex, at least composed of cul3, klhl21 and rbx1.

It is found in the cytoplasm. The protein localises to the cytoskeleton. It localises to the spindle. It participates in protein modification; protein ubiquitination. Substrate-specific adapter of BCR (BTB-CUL3-RBX1) E3 ubiquitin-protein ligase complex required for efficient chromosome alignment and cytokinesis. The BCR(KLHL21) E3 ubiquitin ligase complex regulates localization of the chromosomal passenger complex (CPC) from chromosomes to the spindle midzone in anaphase and mediates the ubiquitination of AURKB. This is Kelch-like protein 21 (klhl21) from Danio rerio (Zebrafish).